The sequence spans 843 residues: Probable inorganic carbon transporter subunit DabA 2 (843 aa).

4 residues coordinate Zn(2+): C352, D354, H536, and C551.

Belongs to the inorganic carbon transporter (TC 9.A.2) DabA family. As to quaternary structure, forms a complex with DabB. It depends on Zn(2+) as a cofactor.

The protein localises to the cell inner membrane. Part of an energy-coupled inorganic carbon pump. This is Probable inorganic carbon transporter subunit DabA 2 from Bradyrhizobium sp. (strain BTAi1 / ATCC BAA-1182).